Reading from the N-terminus, the 766-residue chain is Flocculation suppression protein (766 aa).

Disordered stretches follow at residues 1-52, 129-181, 203-247, 547-619, and 657-766; these read MSEE…HGSK, HDHS…PTKI, KRRA…SSNS, KPVP…SISG, and SVTP…KVKM. Low complexity-rich tracts occupy residues 8–19 and 134–147; these read SAPAPASTPAPA and NDAN…TNDD. The DNA-binding element occupies 64–186; sequence IFIHKLYQIL…NPTKIWEFKH (123 aa). Positions 171-181 are enriched in basic and acidic residues; it reads QEKEKSNPTKI. The span at 208 to 224 shows a compositional bias: low complexity; that stretch reads SRNNSSINSRKNSSNQN. Phosphoserine is present on S220. Residues 236 to 247 show a composition bias toward polar residues; sequence SSIQDPSTSSNS. A Phosphoserine modification is found at S556. Polar residues predominate over residues 679 to 699; the sequence is AVSSNLINSPMNVEHSSSLSQ. Low complexity predominate over residues 708 to 719; sequence LPQPSLPTTSTT. S733 carries the phosphoserine modification. Residues 738–750 show a composition bias toward polar residues; that stretch reads LLNQEDSSTSSAD.

It in the N-terminal section; belongs to the HSF family.

It is found in the nucleus. Involved in cell surface assembly and regulation of the gene related to flocculation (asexual cell aggregation). Mutations in SFL1 causes constitutive cell aggregation. The polypeptide is Flocculation suppression protein (SFL1) (Saccharomyces cerevisiae (strain ATCC 204508 / S288c) (Baker's yeast)).